We begin with the raw amino-acid sequence, 625 residues long: Coagulation factor XI (625 aa).

A signal peptide spans 1–18; the sequence is MTLLYQMVHFALFASVAG. Apple domains follow at residues 20-103, 110-193, 200-283, and 291-374; these read CVTT…SKQC, CSKD…LKSC, CIRD…LQHC, and CHSS…LRLC. Cystine bridges form between cysteine 20–cysteine 103, cysteine 46–cysteine 76, cysteine 50–cysteine 56, cysteine 110–cysteine 193, cysteine 136–cysteine 165, cysteine 140–cysteine 146, cysteine 200–cysteine 283, cysteine 226–cysteine 255, cysteine 230–cysteine 236, cysteine 291–cysteine 374, cysteine 317–cysteine 346, cysteine 321–cysteine 327, cysteine 380–cysteine 500, cysteine 416–cysteine 432, cysteine 514–cysteine 581, cysteine 545–cysteine 560, and cysteine 571–cysteine 599. N-linked (GlcNAc...) asparagine glycosylation is found at asparagine 90 and asparagine 126. One can recognise a Peptidase S1 domain in the interval 388-623; sequence IVGGTQSVHG…YVDWILEKTQ (236 aa). Histidine 431 functions as the Charge relay system in the catalytic mechanism. Asparagine 450 carries an N-linked (GlcNAc...) asparagine glycan. Residue aspartate 480 is the Charge relay system of the active site. Residue asparagine 491 is glycosylated (N-linked (GlcNAc...) asparagine). 547-550 contacts heparin; sequence AGYR. Catalysis depends on serine 575, which acts as the Charge relay system.

It belongs to the peptidase S1 family. Plasma kallikrein subfamily. As to quaternary structure, homodimer; disulfide-linked. After activation the heavy and light chains are also linked by a disulfide bond. Interacts (activated) with F9 (inactive and activated) in calcium-dependent manner. Forms a heterodimer with SERPINA5. Activated by factor XIIa (or XII), which cleaves each polypeptide after Arg-387 into the light chain, which contains the active site, and the heavy chain, which associates with high molecular weight (HMW) kininogen. Activated by F12 (activated); the presence of negatively charged surfaces accelerates activation. Activated by F2 (thrombin); the presence of negatively charged surfaces, such as polyphosphate and dextran sulfate, strongly accelerates activation. Autoactivated; the presence of negatively charged surfaces, such as polyphosphate and dextran sulfate, accelerates autoactivation and autolysis. In terms of processing, N-glycosylated on both chains. N-glycosylated sites mainly consist of nonfucosylated sialylated biantennary (in high abundance) and/or triantennary (in low abundance) complex structures.

The protein localises to the secreted. It catalyses the reaction Selective cleavage of Arg-|-Ala and Arg-|-Val bonds in factor IX to form factor IXa.. With respect to regulation, inhibited by SERPINA5. Functionally, factor XI triggers the middle phase of the intrinsic pathway of blood coagulation by activating factor IX. This is Coagulation factor XI (F11) from Bos taurus (Bovine).